The primary structure comprises 943 residues: Isoleucine--tRNA ligase (943 aa).

The short motif at 59–69 is the 'HIGH' region element; that stretch reads PYANGQIHLGH. An L-isoleucyl-5'-AMP-binding site is contributed by glutamate 577. Positions 618-622 match the 'KMSKS' region motif; the sequence is KMSKS. Lysine 621 lines the ATP pocket. Zn(2+) contacts are provided by cysteine 906, cysteine 909, cysteine 926, and cysteine 929.

This sequence belongs to the class-I aminoacyl-tRNA synthetase family. IleS type 1 subfamily. As to quaternary structure, monomer. The cofactor is Zn(2+).

The protein localises to the cytoplasm. The catalysed reaction is tRNA(Ile) + L-isoleucine + ATP = L-isoleucyl-tRNA(Ile) + AMP + diphosphate. Its function is as follows. Catalyzes the attachment of isoleucine to tRNA(Ile). As IleRS can inadvertently accommodate and process structurally similar amino acids such as valine, to avoid such errors it has two additional distinct tRNA(Ile)-dependent editing activities. One activity is designated as 'pretransfer' editing and involves the hydrolysis of activated Val-AMP. The other activity is designated 'posttransfer' editing and involves deacylation of mischarged Val-tRNA(Ile). The sequence is that of Isoleucine--tRNA ligase from Xylella fastidiosa (strain M23).